The chain runs to 244 residues: tRNA (guanine-N(7)-)-methyltransferase (244 aa).

Residues 1–10 are compositionally biased toward polar residues; the sequence is MSDTPQSPAQ. The segment at 1–20 is disordered; it reads MSDTPQSPAQDSLAEHDEAR. S-adenosyl-L-methionine is bound by residues glutamate 74, glutamate 99, aspartate 126, and aspartate 149. Aspartate 149 is an active-site residue. Residues lysine 153, aspartate 185, and 222–225 contribute to the substrate site; that span reads TKFE.

Belongs to the class I-like SAM-binding methyltransferase superfamily. TrmB family.

It carries out the reaction guanosine(46) in tRNA + S-adenosyl-L-methionine = N(7)-methylguanosine(46) in tRNA + S-adenosyl-L-homocysteine. It participates in tRNA modification; N(7)-methylguanine-tRNA biosynthesis. Its function is as follows. Catalyzes the formation of N(7)-methylguanine at position 46 (m7G46) in tRNA. This Pseudomonas paraeruginosa (strain DSM 24068 / PA7) (Pseudomonas aeruginosa (strain PA7)) protein is tRNA (guanine-N(7)-)-methyltransferase.